The chain runs to 151 residues: Deoxyuridine 5'-triphosphate nucleotidohydrolase (151 aa).

Substrate is bound by residues 70-72 (RSG), Asn-83, 87-89 (LID), and Met-97.

Belongs to the dUTPase family. Requires Mg(2+) as cofactor.

It catalyses the reaction dUTP + H2O = dUMP + diphosphate + H(+). It participates in pyrimidine metabolism; dUMP biosynthesis; dUMP from dCTP (dUTP route): step 2/2. This enzyme is involved in nucleotide metabolism: it produces dUMP, the immediate precursor of thymidine nucleotides and it decreases the intracellular concentration of dUTP so that uracil cannot be incorporated into DNA. In Haemophilus influenzae (strain 86-028NP), this protein is Deoxyuridine 5'-triphosphate nucleotidohydrolase.